Reading from the N-terminus, the 334-residue chain is Beta-hexosaminidase (334 aa).

Substrate contacts are provided by residues D60, R68, R133, and K163 to H164. H176 serves as the catalytic Proton donor/acceptor. Residue D247 is the Nucleophile of the active site.

Belongs to the glycosyl hydrolase 3 family. NagZ subfamily.

It is found in the cytoplasm. The enzyme catalyses Hydrolysis of terminal non-reducing N-acetyl-D-hexosamine residues in N-acetyl-beta-D-hexosaminides.. It participates in cell wall biogenesis; peptidoglycan recycling. In terms of biological role, plays a role in peptidoglycan recycling by cleaving the terminal beta-1,4-linked N-acetylglucosamine (GlcNAc) from peptide-linked peptidoglycan fragments, giving rise to free GlcNAc, anhydro-N-acetylmuramic acid and anhydro-N-acetylmuramic acid-linked peptides. The chain is Beta-hexosaminidase from Xanthomonas oryzae pv. oryzae (strain MAFF 311018).